Consider the following 486-residue polypeptide: BTB/POZ domain and ankyrin repeat-containing protein BOP (486 aa).

Residues 25-115 form the BTB domain; the sequence is SDVTFSVEGR…LYSGQVSIVP (91 aa). The C2HC NPR-type zinc finger occupies 121–135; that stretch reads RPNCGERGCWHTHCS. 4 residues coordinate Zn(2+): Cys124, Cys129, His131, and Cys134. ANK repeat units follow at residues 257 to 286, 287 to 316, 321 to 350, and 354 to 388; these read QKIR…LNLD, EALA…DVNY, AGKT…DPNV, and DNVT…KLRL. 2 disordered regions span residues 403 to 442 and 464 to 486; these read EEGN…NHNI and QMSD…HHDY. Composition is skewed to low complexity over residues 406–418 and 432–442; these read NANN…TTTT and SSSSSGNNHNI. Residues 466-475 are compositionally biased toward basic and acidic residues; sequence SDDHGGRHGD.

Belongs to the plant 'ANKYRIN-BTB/POZ' family. 'NOOT-BOP-COCH-like' (NBCL) subfamily. Homodimer. Expressed in xylem vessels and parenchyma cells of pedicel vascular tissue in the abscission zone (AZ). Accumulates in developing root nodules and present in roots, especially in the upper part.

The protein resides in the nucleus. The protein localises to the cytoplasm. Its subcellular location is the cell membrane. It participates in protein modification; protein ubiquitination. Its function is as follows. May act as a substrate-specific adapter of an E3 ubiquitin-protein ligase complex (CUL3-RBX1-BTB) which mediates the ubiquitination and subsequent proteasomal degradation of target proteins. Transcriptional co-regulator involved in promoting the fate and determination of leaf and flower meristems. Required for the abscission of senescent organs, probably by regulating the cell wall disorganization in abscission zones (AZs, e.g. pulvini at the base of leaves). Involved in the coordination of the symbiotic nodule developmental program; promotes the formation of root nodules by interacting directly with APP1 to modulate the expression of the nuclear transcription factor Y subunit (NF-YA1), a key nodulin. Necessary for the robust maintenance of nodule identity throughout the nodule developmental program. The protein is BTB/POZ domain and ankyrin repeat-containing protein BOP of Lupinus luteus (European yellow lupine).